A 271-amino-acid chain; its full sequence is Acetyl-coenzyme A carboxylase carboxyl transferase subunit alpha (271 aa).

A CoA carboxyltransferase C-terminal domain is found at 1–247 (MSRELIRTAD…KKTILEALGE (247 aa)).

The protein belongs to the AccA family. Acetyl-CoA carboxylase is a heterohexamer composed of biotin carboxyl carrier protein (AccB), biotin carboxylase (AccC) and two subunits each of ACCase subunit alpha (AccA) and ACCase subunit beta (AccD).

It is found in the cytoplasm. The enzyme catalyses N(6)-carboxybiotinyl-L-lysyl-[protein] + acetyl-CoA = N(6)-biotinyl-L-lysyl-[protein] + malonyl-CoA. The protein operates within lipid metabolism; malonyl-CoA biosynthesis; malonyl-CoA from acetyl-CoA: step 1/1. Functionally, component of the acetyl coenzyme A carboxylase (ACC) complex. First, biotin carboxylase catalyzes the carboxylation of biotin on its carrier protein (BCCP) and then the CO(2) group is transferred by the carboxyltransferase to acetyl-CoA to form malonyl-CoA. This is Acetyl-coenzyme A carboxylase carboxyl transferase subunit alpha from Clostridium perfringens (strain ATCC 13124 / DSM 756 / JCM 1290 / NCIMB 6125 / NCTC 8237 / Type A).